The following is a 331-amino-acid chain: dTDP-glucose 4,6-dehydratase (331 aa).

NAD(+)-binding positions include 11–12 (FI), 33–36 (DALT), 57–58 (DI), 77–81 (FAAET), and Ser-96. Residue Thr-81 coordinates substrate. Residue Thr-120 coordinates substrate. Asp-121 (proton donor) is an active-site residue. Active-site proton acceptor residues include Glu-122 and Tyr-147. 147 to 151 (YSSTK) contacts NAD(+). Residue Asn-176 coordinates substrate. Asn-177 is an NAD(+) binding site. Substrate-binding positions include 186–191 (KFIPRQ), 202–204 (KLY), Arg-211, Asn-246, and 269–273 (DRAGH).

This sequence belongs to the NAD(P)-dependent epimerase/dehydratase family. dTDP-glucose dehydratase subfamily. Homodimer. The cofactor is NAD(+).

It catalyses the reaction dTDP-alpha-D-glucose = dTDP-4-dehydro-6-deoxy-alpha-D-glucose + H2O. The protein operates within carbohydrate biosynthesis; dTDP-L-rhamnose biosynthesis. Functionally, catalyzes the dehydration of dTDP-D-glucose to form dTDP-6-deoxy-D-xylo-4-hexulose via a three-step process involving oxidation, dehydration and reduction. Involved in the biosynthesis of the dTDP-L-rhamnose which is a component of the critical linker, D-N-acetylglucosamine-L-rhamnose disaccharide, which connects the galactan region of arabinogalactan to peptidoglycan via a phosphodiester linkage. The sequence is that of dTDP-glucose 4,6-dehydratase (rmlB) from Mycolicibacterium smegmatis (strain ATCC 700084 / mc(2)155) (Mycobacterium smegmatis).